The chain runs to 146 residues: MGDFDMVLKFWGPVEADYSAHGGMVLTRLFTENPETQQLFPKFVGIAQSELAGNAAVSAHGATVLKKLGELLKAKGNHAAILQPLANSHATKHKIPIKNFKLIAEVIGKVMAEKAGLDTAGQQALRNIMATIIADIDATYKELGFS.

Residues 2–141 form the Globin domain; sequence GDFDMVLKFW…IIADIDATYK (140 aa). Nitrite is bound at residue His-60. An O2-binding site is contributed by His-60. His-89 contributes to the heme b binding site.

It belongs to the globin family. Monomeric.

It is found in the cytoplasm. The protein resides in the sarcoplasm. It carries out the reaction Fe(III)-heme b-[protein] + nitric oxide + H2O = Fe(II)-heme b-[protein] + nitrite + 2 H(+). It catalyses the reaction H2O2 + AH2 = A + 2 H2O. Its function is as follows. Monomeric heme protein which primary function is to store oxygen and facilitate its diffusion within muscle tissues. Reversibly binds oxygen through a pentacoordinated heme iron and enables its timely and efficient release as needed during periods of heightened demand. Depending on the oxidative conditions of tissues and cells, and in addition to its ability to bind oxygen, it also has a nitrite reductase activity whereby it regulates the production of bioactive nitric oxide. Under stress conditions, like hypoxia and anoxia, it also protects cells against reactive oxygen species thanks to its pseudoperoxidase activity. The sequence is that of Myoglobin (mb) from Tetraodon nigroviridis (Spotted green pufferfish).